A 791-amino-acid chain; its full sequence is Diacylglycerol kinase gamma (791 aa).

Disordered regions lie at residues 82–103 (KPRH…ANSA) and 117–154 (DEAC…SSSS). Basic and acidic residues predominate over residues 83–92 (PRHETSDHPT). Positions 94–103 (GASNSEANSA) are enriched in polar residues. 2 consecutive EF-hand domains span residues 175 to 210 (RPQD…MLHI) and 220 to 255 (ELRP…TIPL). Asp188, Asp190, Asn192, Glu199, Asp233, Asp235, Asp237, and Glu244 together coordinate Ca(2+). 2 Phorbol-ester/DAG-type zinc fingers span residues 271–321 (RHAW…IPGC) and 336–385 (QHAW…LCDG). In terms of domain architecture, DAGKc spans 430-564 (PGTHPLLVLV…LDRWHLEVIP (135 aa)). Residues 768–791 (APMMMGPPQKSSFFSLRRKSRSKD) are disordered.

Belongs to the eukaryotic diacylglycerol kinase family. In terms of tissue distribution, predominantly expressed in retina and in a much lesser extent in the brain. Other tissues contain extremely low levels of DGK-gamma.

The protein resides in the membrane. It localises to the cytoplasm. The protein localises to the cytosol. Its subcellular location is the cytoskeleton. The catalysed reaction is a 1,2-diacyl-sn-glycerol + ATP = a 1,2-diacyl-sn-glycero-3-phosphate + ADP + H(+). It carries out the reaction 1,2-didecanoyl-sn-glycerol + ATP = 1,2-didecanoyl-sn-glycero-3-phosphate + ADP + H(+). The enzyme catalyses 1-octadecanoyl-2-(5Z,8Z,11Z,14Z-eicosatetraenoyl)-sn-glycerol + ATP = 1-octadecanoyl-2-(5Z,8Z,11Z,14Z-eicosatetraenoyl)-sn-glycero-3-phosphate + ADP + H(+). It catalyses the reaction 1,2-di-(9Z-octadecenoyl)-sn-glycerol + ATP = 1,2-di-(9Z-octadecenoyl)-sn-glycero-3-phosphate + ADP + H(+). The catalysed reaction is 1-octadecanoyl-2-(9Z,12Z)-octadecadienoyl-sn-glycerol + ATP = 1-octadecanoyl-2-(9Z,12Z-octadecadienoyl)-sn-glycero-3-phosphate + ADP + H(+). It functions in the pathway lipid metabolism; glycerolipid metabolism. The activity is calcium-dependent. Requires phosphatidylserine for maximal activity. Functionally, diacylglycerol kinase that converts diacylglycerol/DAG into phosphatidic acid/phosphatidate/PA and regulates the respective levels of these two bioactive lipids. Thereby, acts as a central switch between the signaling pathways activated by these second messengers with different cellular targets and opposite effects in numerous biological processes. Has no apparent specificity with regard to the acyl compositions of diacylglycerol. Specifically expressed in the cerebellum where it controls the level of diacylglycerol which in turn regulates the activity of protein kinase C gamma. Through protein kinase C gamma, indirectly regulates the dendritic development of Purkinje cells, cerebellar long term depression and ultimately cerebellar motor coordination. The protein is Diacylglycerol kinase gamma (DGKG) of Homo sapiens (Human).